A 366-amino-acid chain; its full sequence is 3-isopropylmalate dehydrogenase (366 aa).

NAD(+) is bound at residue 77–90; that stretch reads GPKWDDNPPHLRPE. Residues R97, R107, R135, and D223 each coordinate substrate. Residues D223, D246, and D250 each contribute to the Mg(2+) site. 280–292 is an NAD(+) binding site; it reads GSAPDIAGMNKAN.

Belongs to the isocitrate and isopropylmalate dehydrogenases family. LeuB type 1 subfamily. In terms of assembly, homodimer. It depends on Mg(2+) as a cofactor. Mn(2+) serves as cofactor.

It is found in the cytoplasm. It carries out the reaction (2R,3S)-3-isopropylmalate + NAD(+) = 4-methyl-2-oxopentanoate + CO2 + NADH. It participates in amino-acid biosynthesis; L-leucine biosynthesis; L-leucine from 3-methyl-2-oxobutanoate: step 3/4. Functionally, catalyzes the oxidation of 3-carboxy-2-hydroxy-4-methylpentanoate (3-isopropylmalate) to 3-carboxy-4-methyl-2-oxopentanoate. The product decarboxylates to 4-methyl-2 oxopentanoate. The protein is 3-isopropylmalate dehydrogenase (leuB) of Bacillus caldotenax.